A 198-amino-acid polypeptide reads, in one-letter code: Protein RD3-like (198 aa).

Positions 28–57 (KTLLRELKWHLKERERLIQEIENEQKVKKT) form a coiled coil. Residues 133–168 (GSEQEDLEDSGSMDCSAPSVIQGDSSKRADKDEIPT) form a disordered region. A compositionally biased stretch (basic and acidic residues) spans 157-166 (SSKRADKDEI).

The sequence is that of Protein RD3-like (RD3L) from Homo sapiens (Human).